We begin with the raw amino-acid sequence, 377 residues long: F-box protein At2g05970 (377 aa).

The region spanning 8-55 (ASWSELCPDVLRCVFELLSFSDLNRTRSVCSSWHSASRHCVPTQNQIP) is the F-box domain.

This is F-box protein At2g05970 from Arabidopsis thaliana (Mouse-ear cress).